A 422-amino-acid polypeptide reads, in one-letter code: Enolase (422 aa).

Glutamine 161 is a (2R)-2-phosphoglycerate binding site. Glutamate 203 (proton donor) is an active-site residue. Mg(2+) is bound by residues aspartate 240, glutamate 283, and aspartate 310. (2R)-2-phosphoglycerate-binding residues include lysine 335, arginine 364, serine 365, and lysine 386. Lysine 335 acts as the Proton acceptor in catalysis.

Belongs to the enolase family. Mg(2+) is required as a cofactor.

The protein resides in the cytoplasm. It is found in the secreted. It localises to the cell surface. The catalysed reaction is (2R)-2-phosphoglycerate = phosphoenolpyruvate + H2O. The protein operates within carbohydrate degradation; glycolysis; pyruvate from D-glyceraldehyde 3-phosphate: step 4/5. Its function is as follows. Catalyzes the reversible conversion of 2-phosphoglycerate (2-PG) into phosphoenolpyruvate (PEP). It is essential for the degradation of carbohydrates via glycolysis. The chain is Enolase from Deinococcus deserti (strain DSM 17065 / CIP 109153 / LMG 22923 / VCD115).